Here is a 96-residue protein sequence, read N- to C-terminus: MNIRPLHDRVIVERQEVESKSAGGIVLTGSAAEKSTRGTILAVGKGRILENGSLQPLDVKVGDTVIFAEDRGTRAEKIEGKEVLIMSEFNIMAIVE.

It belongs to the GroES chaperonin family. In terms of assembly, heptamer of 7 subunits arranged in a ring. Interacts with the chaperonin GroEL.

It is found in the cytoplasm. Functionally, together with the chaperonin GroEL, plays an essential role in assisting protein folding. The GroEL-GroES system forms a nano-cage that allows encapsulation of the non-native substrate proteins and provides a physical environment optimized to promote and accelerate protein folding. GroES binds to the apical surface of the GroEL ring, thereby capping the opening of the GroEL channel. The chain is Co-chaperonin GroES from Vibrio atlanticus (strain LGP32) (Vibrio splendidus (strain Mel32)).